The primary structure comprises 561 residues: Arginine--tRNA ligase (561 aa).

Positions 129–139 (ANPTGPLHVGH) match the 'HIGH' region motif.

This sequence belongs to the class-I aminoacyl-tRNA synthetase family. As to quaternary structure, monomer.

It localises to the cytoplasm. The catalysed reaction is tRNA(Arg) + L-arginine + ATP = L-arginyl-tRNA(Arg) + AMP + diphosphate. In Bordetella parapertussis (strain 12822 / ATCC BAA-587 / NCTC 13253), this protein is Arginine--tRNA ligase.